We begin with the raw amino-acid sequence, 47 residues long: Large ribosomal subunit protein eL40 (47 aa).

Belongs to the eukaryotic ribosomal protein eL40 family.

This chain is Large ribosomal subunit protein eL40, found in Methanocaldococcus jannaschii (strain ATCC 43067 / DSM 2661 / JAL-1 / JCM 10045 / NBRC 100440) (Methanococcus jannaschii).